Here is a 118-residue protein sequence, read N- to C-terminus: MICOS complex subunit MIC13 (118 aa).

Residues 1-7 are Mitochondrial matrix-facing; sequence MVPRVWS. Residues 8 to 26 traverse the membrane as a helical segment; that stretch reads LMRFLIKGSVAGGAIYLVY. The Mitochondrial intermembrane segment spans residues 27–118; the sequence is DQDPLGPSDK…GWEYLKERTK (92 aa).

It belongs to the MICOS complex subunit Mic13 family. In terms of assembly, component of the mitochondrial contact site and cristae organizing system (MICOS) complex, composed of at least MICOS10/MIC10, CHCHD3/MIC19, CHCHD6/MIC25, APOO/MIC26, MICOS13/MIC13, APOOL/MIC27 and IMMT/MIC60. The MICOS complex associates with mitochondrial outer membrane proteins SAMM50, MTX1 and MTX2 (together described as components of the mitochondrial outer membrane sorting assembly machinery (SAM) complex) and DNAJC11, mitochondrial inner membrane protein TMEM11 and with HSPA9. The MICOS and SAM complexes together with DNAJC11 are part of a large protein complex spanning both membranes termed the mitochondrial intermembrane space bridging (MIB) complex.

The protein localises to the mitochondrion inner membrane. Functionally, component of the MICOS complex, a large protein complex of the mitochondrial inner membrane that plays crucial roles in the maintenance of crista junctions, inner membrane architecture, and formation of contact sites to the outer membrane. Constituent of mature MICOS complex, it is required for the formation of cristae junction (CJ) and maintenance of cristae morphology. Required for the incorporation of MICOS10/MIC10 into the MICOS complex. The chain is MICOS complex subunit MIC13 from Sus scrofa (Pig).